Reading from the N-terminus, the 447-residue chain is ATP-dependent protease ATPase subunit HslU (447 aa).

Residues I18, 60–65 (GVGKTE), D259, E325, and R397 contribute to the ATP site.

It belongs to the ClpX chaperone family. HslU subfamily. As to quaternary structure, a double ring-shaped homohexamer of HslV is capped on each side by a ring-shaped HslU homohexamer. The assembly of the HslU/HslV complex is dependent on binding of ATP.

Its subcellular location is the cytoplasm. In terms of biological role, ATPase subunit of a proteasome-like degradation complex; this subunit has chaperone activity. The binding of ATP and its subsequent hydrolysis by HslU are essential for unfolding of protein substrates subsequently hydrolyzed by HslV. HslU recognizes the N-terminal part of its protein substrates and unfolds these before they are guided to HslV for hydrolysis. This chain is ATP-dependent protease ATPase subunit HslU, found in Burkholderia cenocepacia (strain ATCC BAA-245 / DSM 16553 / LMG 16656 / NCTC 13227 / J2315 / CF5610) (Burkholderia cepacia (strain J2315)).